Reading from the N-terminus, the 410-residue chain is Mating-type locus allele B3 protein (410 aa).

Positions methionine 1 to cysteine 110 are variable domain between B alleles. A DNA-binding region (homeobox; TALE-type) is located at residues glycine 107–histidine 184. A highly conserved between B alleles region spans residues arginine 111–valine 410. 2 disordered regions span residues alanine 203 to aspartate 224 and threonine 278 to leucine 335. Polar residues predominate over residues leucine 205–glutamate 219. Residues lysine 276–arginine 308 carry the Nuclear localization signal motif. A compositionally biased stretch (basic residues) spans alanine 291–serine 307. The span at proline 312–leucine 335 shows a compositional bias: polar residues. The segment at proline 333 to valine 410 is not essential for B3 function.

It belongs to the TALE/M-ATYP homeobox family.

It localises to the nucleus. The B locus has at least 25 alleles, and any combination of two different B alleles yields a multimeric regulatory protein, that activates genes responsible for the pathogenicity and for the sexual development of the fungus within the corn plant. In Mycosarcoma maydis (Corn smut fungus), this protein is Mating-type locus allele B3 protein.